The primary structure comprises 240 residues: Guanylate kinase (240 aa).

The Guanylate kinase-like domain occupies 56–236 (GRIFVITGPS…TLNELKSILL (181 aa)). 63-70 (GPSGVGKS) lines the ATP pocket.

This sequence belongs to the guanylate kinase family.

Its subcellular location is the cytoplasm. It carries out the reaction GMP + ATP = GDP + ADP. Its function is as follows. Essential for recycling GMP and indirectly, cGMP. The sequence is that of Guanylate kinase (gmk) from Mycoplasma genitalium (strain ATCC 33530 / DSM 19775 / NCTC 10195 / G37) (Mycoplasmoides genitalium).